The chain runs to 448 residues: DEAD-box ATP-dependent RNA helicase CshB (448 aa).

The short motif at 4–32 is the Q motif element; the sequence is HPFEQFNLESSLIDAVKDLNFEKPTEIQN. Residues 35 to 206 form the Helicase ATP-binding domain; that stretch reads IPRILKRTNL…NKYLSHPEYV (172 aa). 48-55 lines the ATP pocket; that stretch reads SQTGTGKS. The short motif at 154–157 is the DEAD box element; it reads DEAD. Residues 236-386 form the Helicase C-terminal domain; that stretch reads NLIDILNPYL…EVKAHNQRQA (151 aa). Basic residues predominate over residues 400 to 418; sequence NKVRSKIKNKVKPGYKKKF. The tract at residues 400–448 is disordered; the sequence is NKVRSKIKNKVKPGYKKKFKQEVEKMKRQERKQFSKQQNRQKRKQNKKG. Residues 419 to 432 are compositionally biased toward basic and acidic residues; sequence KQEVEKMKRQERKQ. The span at 438-448 shows a compositional bias: basic residues; the sequence is NRQKRKQNKKG.

This sequence belongs to the DEAD box helicase family. CshB subfamily.

Its subcellular location is the cytoplasm. It catalyses the reaction ATP + H2O = ADP + phosphate + H(+). Its function is as follows. Probable DEAD-box RNA helicase. May work in conjunction with the cold shock proteins to ensure proper initiation of transcription at low and optimal temperatures. The polypeptide is DEAD-box ATP-dependent RNA helicase CshB (Staphylococcus aureus (strain NCTC 8325 / PS 47)).